A 73-amino-acid chain; its full sequence is Putative antitoxin VapB16 (73 aa).

It belongs to the UPF0330 family.

Its function is as follows. Possibly the antitoxin component of a type II toxin-antitoxin (TA) system. Its cognate toxin is VapC16 (Potential). This is Putative antitoxin VapB16 (vapB16) from Archaeoglobus fulgidus (strain ATCC 49558 / DSM 4304 / JCM 9628 / NBRC 100126 / VC-16).